Here is a 342-residue protein sequence, read N- to C-terminus: tRNA dimethylallyltransferase (342 aa).

39 to 46 (GPTGSGKT) serves as a coordination point for ATP. 41 to 46 (TGSGKT) provides a ligand contact to substrate. Residues 64 to 67 (DSMQ) are interaction with substrate tRNA.

Belongs to the IPP transferase family. In terms of assembly, monomer. Mg(2+) serves as cofactor.

It catalyses the reaction adenosine(37) in tRNA + dimethylallyl diphosphate = N(6)-dimethylallyladenosine(37) in tRNA + diphosphate. Functionally, catalyzes the transfer of a dimethylallyl group onto the adenine at position 37 in tRNAs that read codons beginning with uridine, leading to the formation of N6-(dimethylallyl)adenosine (i(6)A). This Chlamydia abortus (strain DSM 27085 / S26/3) (Chlamydophila abortus) protein is tRNA dimethylallyltransferase.